The primary structure comprises 156 residues: Probable chemoreceptor glutamine deamidase CheD (156 aa).

The protein belongs to the CheD family.

It carries out the reaction L-glutaminyl-[protein] + H2O = L-glutamyl-[protein] + NH4(+). Probably deamidates glutamine residues to glutamate on methyl-accepting chemotaxis receptors (MCPs), playing an important role in chemotaxis. This chain is Probable chemoreceptor glutamine deamidase CheD, found in Sulfurimonas denitrificans (strain ATCC 33889 / DSM 1251) (Thiomicrospira denitrificans (strain ATCC 33889 / DSM 1251)).